Here is a 319-residue protein sequence, read N- to C-terminus: GATA transcription factor 18 (319 aa).

Positions 1 to 15 (MPDAAAAAAAAQDAD) are enriched in low complexity. The tract at residues 1–74 (MPDAAAAAAA…AAPEPVSALL (74 aa)) is disordered. Over residues 31–60 (DNDDDDGDDGTEEDEEEDDDEEGDEEELPP) the composition is skewed to acidic residues. One can recognise a Tify domain in the interval 74–109 (LPGSPNQLTLLFQGEVYVFESVTPEKVQAVLLLLGR). One can recognise a CCT domain in the interval 143 to 185 (RVASLIRFREKRKERNFDKKIRYAVRKEVALRMQRRKGQFAGR). The segment at 215-242 (CQNCGTSEKMTPAMRRGPAGPRTLCNAC) adopts a GATA-type zinc-finger fold. The tract at residues 292–319 (ITASHGEVMGDSTPANEAEIGAPKAQSQ) is disordered.

Belongs to the type IV zinc-finger family. Class C subfamily.

It localises to the nucleus. Transcriptional activator that specifically binds 5'-GATA-3' or 5'-GAT-3' motifs within gene promoters. The sequence is that of GATA transcription factor 18 from Oryza sativa subsp. japonica (Rice).